Consider the following 1202-residue polypeptide: Caffeine-induced protein 16 (1202 aa).

The PAP-associated domain occupies 1105–1159 (NIALLLRGFFCYYGLTTQYSFDWEAYMIDISSSQLKRKSTEFKDCPFVVLDPFLK).

This Schizosaccharomyces pombe (strain 972 / ATCC 24843) (Fission yeast) protein is Caffeine-induced protein 16 (cid16).